The primary structure comprises 61 residues: PI-actitoxin-Axm2b (61 aa).

Positions 7–57 (CYLPAVRGRCRGYFPRYFFSSETGKCERFIYGGCGGNRNNFESAQECGSTC) constitute a BPTI/Kunitz inhibitor domain. 3 disulfides stabilise this stretch: Cys7–Cys57, Cys16–Cys40, and Cys32–Cys53.

It is found in the secreted. The protein resides in the nematocyst. Its function is as follows. Protease inhibitor. The sequence is that of PI-actitoxin-Axm2b from Anthopleura aff. xanthogrammica (Sea anemone).